Here is a 389-residue protein sequence, read N- to C-terminus: Phospho-N-acetylmuramoyl-pentapeptide-transferase (389 aa).

A run of 10 helical transmembrane segments spans residues 25-45, 73-93, 97-117, 135-155, 189-209, 222-242, 259-279, 286-306, 311-331, and 366-386; these read RAVA…PWVI, TMGG…WADL, FIWI…VDDY, FWQS…VSEA, SMTY…VIVG, GLVI…AYVM, AGEM…FLWF, VFMG…IAVI, IVLF…MLQV, and QVVV…LSTL.

This sequence belongs to the glycosyltransferase 4 family. MraY subfamily. It depends on Mg(2+) as a cofactor.

The protein resides in the cell inner membrane. The enzyme catalyses UDP-N-acetyl-alpha-D-muramoyl-L-alanyl-gamma-D-glutamyl-meso-2,6-diaminopimeloyl-D-alanyl-D-alanine + di-trans,octa-cis-undecaprenyl phosphate = di-trans,octa-cis-undecaprenyl diphospho-N-acetyl-alpha-D-muramoyl-L-alanyl-D-glutamyl-meso-2,6-diaminopimeloyl-D-alanyl-D-alanine + UMP. It participates in cell wall biogenesis; peptidoglycan biosynthesis. In terms of biological role, catalyzes the initial step of the lipid cycle reactions in the biosynthesis of the cell wall peptidoglycan: transfers peptidoglycan precursor phospho-MurNAc-pentapeptide from UDP-MurNAc-pentapeptide onto the lipid carrier undecaprenyl phosphate, yielding undecaprenyl-pyrophosphoryl-MurNAc-pentapeptide, known as lipid I. The chain is Phospho-N-acetylmuramoyl-pentapeptide-transferase from Paraburkholderia phymatum (strain DSM 17167 / CIP 108236 / LMG 21445 / STM815) (Burkholderia phymatum).